Here is a 296-residue protein sequence, read N- to C-terminus: Xyloglucan endotransglucosylase/hydrolase 1 (296 aa).

Positions 1–23 (MGSSSSMWTVCVILASLASAALC) are cleaved as a signal peptide. Residues 24–222 (ANPRRPVDVQ…WSKAPFIAAY (199 aa)) enclose the GH16 domain. Residue Glu108 is the Nucleophile of the active site. Glu112 acts as the Proton donor in catalysis. Xyloglucan is bound at residue Glu112. Asn116 carries an N-linked (GlcNAc...) asparagine glycan. Xyloglucan contacts are provided by residues 125 to 127 (QTN), 135 to 137 (DRE), 201 to 202 (DW), and Gly206. Intrachain disulfides connect Cys230-Cys239 and Cys276-Cys290. Arg281 serves as a coordination point for xyloglucan.

The protein belongs to the glycosyl hydrolase 16 family. XTH group 1 subfamily. In terms of processing, contains at least one intrachain disulfide bond essential for its enzymatic activity. N-glycosylated; not essential for its enzymatic activity.

It is found in the secreted. Its subcellular location is the cell wall. The protein localises to the extracellular space. The protein resides in the apoplast. It catalyses the reaction breaks a beta-(1-&gt;4) bond in the backbone of a xyloglucan and transfers the xyloglucanyl segment on to O-4 of the non-reducing terminal glucose residue of an acceptor, which can be a xyloglucan or an oligosaccharide of xyloglucan.. Its function is as follows. Catalyzes xyloglucan endohydrolysis (XEH) and/or endotransglycosylation (XET). Cleaves and religates xyloglucan polymers, an essential constituent of the primary cell wall, and thereby participates in cell wall construction of growing tissues. The chain is Xyloglucan endotransglucosylase/hydrolase 1 from Glycine max (Soybean).